Reading from the N-terminus, the 285-residue chain is ATP synthase gamma chain (285 aa).

The protein belongs to the ATPase gamma chain family. In terms of assembly, F-type ATPases have 2 components, CF(1) - the catalytic core - and CF(0) - the membrane proton channel. CF(1) has five subunits: alpha(3), beta(3), gamma(1), delta(1), epsilon(1). CF(0) has three main subunits: a, b and c.

The protein resides in the cell membrane. Its function is as follows. Produces ATP from ADP in the presence of a proton gradient across the membrane. The gamma chain is believed to be important in regulating ATPase activity and the flow of protons through the CF(0) complex. The chain is ATP synthase gamma chain from Clostridium novyi (strain NT).